Consider the following 479-residue polypeptide: F-box/LRR-repeat protein 16 (479 aa).

The tract at residues 1 to 62 (MSSPGIDGDP…PTLPPPSLAA (62 aa)) is disordered. Residues 47–60 (CQPPPPPTLPPPSL) are compositionally biased toward pro residues. At arginine 92 the chain carries Omega-N-methylarginine. The F-box domain occupies 94-139 (PLATDEKILNGLFWYFSACEKCVLAQVCKAWRRVLYQPKFWAGLTP). 7 LRR repeats span residues 244 to 266 (ITSLSVSDCINVADDAIAAISQL), 267 to 290 (LPNLAELSLQAYHVTDTALAYFTA), 319 to 343 (LPNLTALSLSGCSKVTDDGVELVAE), 345 to 369 (LRKLRSLDLSWCPRITDMALEYVAC), 371 to 395 (LHRLEELVLDRCVRITDTGLSYLST), 396 to 420 (MSSLRSLYLRWCCQVQDFGLKHLLA), and 446 to 470 (LQELEELELTNCPGATPELFKYFSQ).

Interacts with SKP1 and CUL1.

Functionally, substrate-recognition component of the SCF (SKP1-CUL1-F-box protein)-type E3 ubiquitin ligase complex. This chain is F-box/LRR-repeat protein 16 (FBXL16), found in Homo sapiens (Human).